We begin with the raw amino-acid sequence, 246 residues long: Carboxylesterase (246 aa).

Ser93 (nucleophile) is an active-site residue. Catalysis depends on charge relay system residues Asp192 and His222.

It belongs to the lipase/esterase LIP3/BchO family. In terms of assembly, homodimer.

The enzyme catalyses a carboxylic ester + H2O = an alcohol + a carboxylate + H(+). Involved in the detoxification of xenobiotics. Shows maximal activity with C6 substrates, with gradually decreasing activity from C8 to C12 substrates. No activity for higher chain length substrates acids rather than long-chain ones. This Bacillus subtilis (strain 168) protein is Carboxylesterase (est).